The chain runs to 88 residues: MSEMIVLPHKVTVKVPLASRVDAERCLQVLAPDRELKEELVQRNLFVDDNYLVVNYSCSSARMTRVTVNSLFENLYLIIDTMHELSSL.

Belongs to the CTAG/PCC1 family. In terms of assembly, component of the EKC/KEOPS complex composed of at least of SPAP27G11.07c/BUD32, cgi121, gon7, pgp2 and SPAC4H3.13/PCC1; the whole complex dimerizes.

The protein localises to the cytoplasm. It is found in the nucleus. Its subcellular location is the chromosome. It localises to the telomere. Its function is as follows. Component of the EKC/KEOPS complex that is required for the formation of a threonylcarbamoyl group on adenosine at position 37 (t(6)A37) in tRNAs that read codons beginning with adenine. The complex is probably involved in the transfer of the threonylcarbamoyl moiety of threonylcarbamoyl-AMP (TC-AMP) to the N6 group of A37. SPAC4H3.13/PCC1 functions as a dimerization module for the complex. The EKC/KEOPS complex also promotes both telomere uncapping and telomere elongation. The complex is required for efficient recruitment of transcriptional coactivators. This is EKC/KEOPS complex subunit SPAC4H3.13 from Schizosaccharomyces pombe (strain 972 / ATCC 24843) (Fission yeast).